We begin with the raw amino-acid sequence, 204 residues long: tRNA (pseudouridine(54)-N(1))-methyltransferase (204 aa).

Positions 136 and 158 each coordinate S-adenosyl-L-methionine.

It belongs to the methyltransferase superfamily. TrmY family. In terms of assembly, homodimer.

Its subcellular location is the cytoplasm. The enzyme catalyses pseudouridine(54) in tRNA + S-adenosyl-L-methionine = N(1)-methylpseudouridine(54) in tRNA + S-adenosyl-L-homocysteine + H(+). Its function is as follows. Specifically catalyzes the N1-methylation of pseudouridine at position 54 (Psi54) in tRNAs. This chain is tRNA (pseudouridine(54)-N(1))-methyltransferase, found in Pyrococcus abyssi (strain GE5 / Orsay).